The primary structure comprises 466 residues: Asparagine--tRNA ligase (466 aa).

The protein belongs to the class-II aminoacyl-tRNA synthetase family. Homodimer.

The protein localises to the cytoplasm. The catalysed reaction is tRNA(Asn) + L-asparagine + ATP = L-asparaginyl-tRNA(Asn) + AMP + diphosphate + H(+). The chain is Asparagine--tRNA ligase from Vibrio cholerae serotype O1 (strain ATCC 39315 / El Tor Inaba N16961).